A 340-amino-acid chain; its full sequence is Biotin synthase (340 aa).

In terms of domain architecture, Radical SAM core spans 53–280 (SAIQLSSLLS…LARVRLSAGR (228 aa)). Cys68, Cys72, and Cys75 together coordinate [4Fe-4S] cluster. Residues Cys112, Cys143, Cys203, and Arg275 each coordinate [2Fe-2S] cluster.

This sequence belongs to the radical SAM superfamily. Biotin synthase family. Homodimer. The cofactor is [4Fe-4S] cluster. [2Fe-2S] cluster serves as cofactor.

The catalysed reaction is (4R,5S)-dethiobiotin + (sulfur carrier)-SH + 2 reduced [2Fe-2S]-[ferredoxin] + 2 S-adenosyl-L-methionine = (sulfur carrier)-H + biotin + 2 5'-deoxyadenosine + 2 L-methionine + 2 oxidized [2Fe-2S]-[ferredoxin]. Its pathway is cofactor biosynthesis; biotin biosynthesis; biotin from 7,8-diaminononanoate: step 2/2. Functionally, catalyzes the conversion of dethiobiotin (DTB) to biotin by the insertion of a sulfur atom into dethiobiotin via a radical-based mechanism. This chain is Biotin synthase, found in Bordetella petrii (strain ATCC BAA-461 / DSM 12804 / CCUG 43448).